A 371-amino-acid chain; its full sequence is uncharacterized protein (371 aa).

Helical transmembrane passes span 9–29 (FTLD…VFLI), 58–78 (VLAF…FLAI), 98–118 (LIVA…SFIF), 133–153 (LAPF…VSVI), 159–179 (YDVN…ALAA), 183–203 (ISNF…IGDW), and 330–350 (IIEI…MVVV).

This sequence belongs to the MscS (TC 1.A.23) family.

It is found in the cell membrane. May play a role in resistance to osmotic downshock. This is an uncharacterized protein from Bacillus subtilis (strain 168).